Reading from the N-terminus, the 106-residue chain is Small ribosomal subunit protein uS10 (106 aa).

It belongs to the universal ribosomal protein uS10 family. As to quaternary structure, part of the 30S ribosomal subunit.

Involved in the binding of tRNA to the ribosomes. This Prochlorococcus marinus subsp. pastoris (strain CCMP1986 / NIES-2087 / MED4) protein is Small ribosomal subunit protein uS10.